The sequence spans 88 residues: Mitochondrial import inner membrane translocase subunit Tim10 (88 aa).

The short motif at 25–49 (CSAKCISKYNEGDLNVGESVCAERC) is the Twin CX3C motif element. Cystine bridges form between Cys25–Cys49 and Cys29–Cys45. Positions 63–88 (KMSGTQPGQEVPQEAPAAAPEKKGWF) are disordered. The segment covering 68-81 (QPGQEVPQEAPAAA) has biased composition (low complexity).

The protein belongs to the small Tim family. Heterohexamer; composed of 3 copies of timm9 and 3 copies of timm10, named soluble 70 kDa complex. Associates directly with the TIM22 complex, whose core is composed of timm22. Interacts with the transmembrane regions of multi-pass transmembrane proteins in transit.

The protein resides in the mitochondrion inner membrane. Functionally, component of the TIM22 complex, a complex that mediates the import and insertion of multi-pass transmembrane proteins into the mitochondrial inner membrane. The TIM22 complex forms a twin-pore translocase that uses the membrane potential as external driving force. This Dictyostelium discoideum (Social amoeba) protein is Mitochondrial import inner membrane translocase subunit Tim10 (timm10).